The primary structure comprises 345 residues: Nicotinate-nucleotide--dimethylbenzimidazole phosphoribosyltransferase (345 aa).

The active-site Proton acceptor is the glutamate 312.

It belongs to the CobT family.

It carries out the reaction 5,6-dimethylbenzimidazole + nicotinate beta-D-ribonucleotide = alpha-ribazole 5'-phosphate + nicotinate + H(+). The protein operates within nucleoside biosynthesis; alpha-ribazole biosynthesis; alpha-ribazole from 5,6-dimethylbenzimidazole: step 1/2. Catalyzes the synthesis of alpha-ribazole-5'-phosphate from nicotinate mononucleotide (NAMN) and 5,6-dimethylbenzimidazole (DMB). The chain is Nicotinate-nucleotide--dimethylbenzimidazole phosphoribosyltransferase from Bacteroides fragilis (strain YCH46).